Reading from the N-terminus, the 1036-residue chain is Hexagonally packed intermediate-layer surface protein (1036 aa).

The N-terminal stretch at 1–17 (MKKNIALMALTGVLTLA) is a signal peptide. Disulfide bonds link Cys-74–Cys-86, Cys-256–Cys-275, and Cys-642–Cys-754.

Post-translationally, glycosylated; contains six glycans. In terms of processing, acylated in the N-terminal region. The N-terminus is blocked.

Its subcellular location is the secreted. It is found in the cell wall. It localises to the S-layer. Functionally, shape maintenance, possible protection from noxious enzymes or exogenous and unsettling DNA, and may mediate homotypic cell-cell contacts. This Deinococcus radiodurans protein is Hexagonally packed intermediate-layer surface protein (hpi).